A 244-amino-acid polypeptide reads, in one-letter code: Orotidine 5'-phosphate decarboxylase (244 aa).

Residues D20, K42, D70 to T79, T125, R186, Q195, G215, and R216 each bind substrate. The active-site Proton donor is the K72.

The protein belongs to the OMP decarboxylase family. Type 1 subfamily. In terms of assembly, homodimer.

The catalysed reaction is orotidine 5'-phosphate + H(+) = UMP + CO2. Its pathway is pyrimidine metabolism; UMP biosynthesis via de novo pathway; UMP from orotate: step 2/2. Its function is as follows. Catalyzes the decarboxylation of orotidine 5'-monophosphate (OMP) to uridine 5'-monophosphate (UMP). The chain is Orotidine 5'-phosphate decarboxylase from Xylella fastidiosa (strain M12).